The chain runs to 990 residues: Sister chromatid cohesion protein PDS5 homolog E (990 aa).

HEAT repeat units lie at residues 31 to 57 (DATL…SVQK), 58 to 96 (ALHP…ITAP), 153 to 190 (DLVL…DESE), 191 to 228 (EVPM…SCTC), and 232 to 269 (PCIM…HNDV). Residues 262–565 (TTQAHNDVKP…AGEEVESNTN (304 aa)) form a disordered region. Basic and acidic residues predominate over residues 267 to 281 (NDVKPKDNEADEKIS). Residues 302 to 314 (KGTRSKRSARGGT) are compositionally biased toward basic residues. Polar residues-rich tracts occupy residues 328-342 (EGLS…ASGS) and 394-410 (VGQT…SSGR). Composition is skewed to basic and acidic residues over residues 421–430 (TKMEETDHDV), 448–477 (PAKE…EKAD), and 503–512 (VHSDAKKKNS). Positions 458 to 465 (VKKHEDGI) match the Nuclear localization signal 1 motif. Short sequence motifs (nuclear localization signal) lie at residues 539 to 546 (TKKSEQAP) and 583 to 590 (DKKFYEGV). Residues 653 to 966 (KKRKIVSKNV…VGNEAEEDDQ (314 aa)) are disordered. Low complexity predominate over residues 662-673 (VEPSSSPEVRSS). 2 consecutive short sequence motifs (nuclear localization signal) follow at residues 677–684 (MKKKDSVT) and 715–722 (LKKLNGEP). Basic residues predominate over residues 727-742 (GRTGKKQKVTQAMHRK). The span at 746–760 (DCDEQEDLETKDEED) shows a compositional bias: acidic residues. Composition is skewed to basic and acidic residues over residues 761-810 (SLKL…KTNG), 819-890 (TDGK…KETN), and 898-947 (EEQK…DKET).

Belongs to the PDS5 family. As to quaternary structure, interacts with the cohesin complex.

It is found in the nucleus. In terms of biological role, cohesin cofactor dispensable during the meiotic division but playing an important role in DNA repair by homologous recombination (HR) probably by helping SMC5/SMC6 complex. Regulator of sister chromatid cohesion in mitosis which may stabilize cohesin complex association with chromatin. May couple sister chromatid cohesion during mitosis to DNA replication. Cohesion ensures that chromosome partitioning is accurate in both meiotic and mitotic cells and plays an important role in DNA repair. The chain is Sister chromatid cohesion protein PDS5 homolog E from Arabidopsis thaliana (Mouse-ear cress).